The primary structure comprises 403 residues: Probable N-acetyltransferase HLS1 (403 aa).

The 176-residue stretch at 2–177 folds into the N-acetyltransferase domain; it reads TVVREYDPTR…VNPVYAHRVN (176 aa).

This sequence belongs to the acetyltransferase family.

Its function is as follows. Ethylene-responsive N-acetyltransferase required for differential cell elongation in the hypocotyl. Regulates apical hook formation of dark-grown seedlings. May control differential cell growth by regulating auxin activity. May be involved in negative feedback regulation of auxin homeostasis through the control of GH3-like genes. Modulates de novo shoot organogenesis. The chain is Probable N-acetyltransferase HLS1 (HLS1) from Arabidopsis thaliana (Mouse-ear cress).